Consider the following 411-residue polypeptide: Serine hydroxymethyltransferase (411 aa).

Residues leucine 119 and 123–125 contribute to the (6S)-5,6,7,8-tetrahydrofolate site; that span reads GHL. Lysine 228 is subject to N6-(pyridoxal phosphate)lysine.

The protein belongs to the SHMT family. Homodimer. It depends on pyridoxal 5'-phosphate as a cofactor.

The protein resides in the cytoplasm. It catalyses the reaction (6R)-5,10-methylene-5,6,7,8-tetrahydrofolate + glycine + H2O = (6S)-5,6,7,8-tetrahydrofolate + L-serine. The protein operates within one-carbon metabolism; tetrahydrofolate interconversion. It participates in amino-acid biosynthesis; glycine biosynthesis; glycine from L-serine: step 1/1. In terms of biological role, catalyzes the reversible interconversion of serine and glycine with tetrahydrofolate (THF) serving as the one-carbon carrier. This reaction serves as the major source of one-carbon groups required for the biosynthesis of purines, thymidylate, methionine, and other important biomolecules. Also exhibits THF-independent aldolase activity toward beta-hydroxyamino acids, producing glycine and aldehydes, via a retro-aldol mechanism. This Clostridium kluyveri (strain NBRC 12016) protein is Serine hydroxymethyltransferase.